Reading from the N-terminus, the 284-residue chain is Agamous-like MADS-box protein AGL49 (284 aa).

Positions 1 to 20 are disordered; that stretch reads MAPRQKKPNKSDDDDGDLHR. Positions 21–66 constitute an MADS-box domain; sequence KKQSFFKQRFPGFKKKASELSVLCGNSVGFICYGPDNDLHVWPQSQ.

As to quaternary structure, interacts with MEE14/CBP1.

The protein resides in the nucleus. In terms of biological role, probable transcription factor that may function in the maintenance of the proper function of the central cell in pollen tube attraction. In Arabidopsis thaliana (Mouse-ear cress), this protein is Agamous-like MADS-box protein AGL49.